A 100-amino-acid polypeptide reads, in one-letter code: Urease subunit gamma (100 aa).

It belongs to the urease gamma subunit family. As to quaternary structure, heterotrimer of UreA (gamma), UreB (beta) and UreC (alpha) subunits. Three heterotrimers associate to form the active enzyme.

It localises to the cytoplasm. It carries out the reaction urea + 2 H2O + H(+) = hydrogencarbonate + 2 NH4(+). It participates in nitrogen metabolism; urea degradation; CO(2) and NH(3) from urea (urease route): step 1/1. This is Urease subunit gamma from Azotobacter vinelandii (strain DJ / ATCC BAA-1303).